The following is a 629-amino-acid chain: MFYPDPFDVIIIGGGHAGTEAAMAAARMGQQTLLLTHNIDTLGQMSCNPAIGGIGKGHLVKEVDALGGLMAKAIDLAGIQFRILNASKGPAVRATRAQADRVLYRQAVRTALENQPNLMIFQQAVEDLIVENDRVVGAVTQMGLKFRAKAVVLTVGTFLDGKIHIGLDNYSGGRAGDPPSIPLSRRLRELPLRVGRLKTGTPPRIDARTIDFSVLAQQHGDNPMPVFSFMGNASQHPQQVPCYITHTNEKTHDVIRSNLDRSPMYAGVIEGVGPRYCPSIEDKVMRFADRNQHQIFLEPEGLTSNEIYPNGISTSLPFDVQMQIVRSMQGMENAKIVRPGYAIEYDFFDPRDLKPTLESKFIQGLFFAGQINGTTGYEEAAAQGLLAGLNAARLSADKEGWAPARSQAYLGVLVDDLCTLGTKEPYRMFTSRAEYRLMLREDNADLRLTEIGRELGLVDDERWARFNEKLENIERERQRLKSTWVTPSAEAAAEVNAHLTAPLSREASGEDLLRRPEMTYEKLTTLTPFAPALTDEQAAEQVEIQVKYEGYIARQQDEIEKQLRNENTLLPATLDYRQVSGLSNEVIAKLNDHKPASIGQASRISGVTPAAISILLVWLKKQGMLRRSA.

FAD-binding positions include 13–18, V125, and S180; that span reads GGGHAG. Residue 273 to 287 coordinates NAD(+); it reads GPRYCPSIEDKVMRF. FAD is bound at residue Q370.

This sequence belongs to the MnmG family. As to quaternary structure, homodimer. Heterotetramer of two MnmE and two MnmG subunits. Requires FAD as cofactor.

The protein localises to the cytoplasm. Its function is as follows. NAD-binding protein involved in the addition of a carboxymethylaminomethyl (cmnm) group at the wobble position (U34) of certain tRNAs, forming tRNA-cmnm(5)s(2)U34. This Escherichia coli (strain SMS-3-5 / SECEC) protein is tRNA uridine 5-carboxymethylaminomethyl modification enzyme MnmG.